A 1485-amino-acid polypeptide reads, in one-letter code: Formin BNR1 (1485 aa).

3 disordered regions span residues 65 to 88, 226 to 248, and 549 to 575; these read HLPPPRLDTDSESVSSRTSSPTLH, HDDSSTSKLSIESGGSSGAPTET, and ANTSLEEDELTPELEDNLSGTESSFDE. The region spanning 110-636 is the GBD/FH3 domain; that stretch reads NQIPPEEIVD…HVTNESRVIG (527 aa). Residues 231-248 are compositionally biased toward polar residues; that stretch reads TSKLSIESGGSSGAPTET. The segment covering 553–564 has biased composition (acidic residues); it reads LEEDELTPELED. Residues 660 to 734 adopt a coiled-coil conformation; that stretch reads ARRAVAESKM…EQLQSPNNTA (75 aa). Positions 746–874 are disordered; the sequence is GNGTVASLKD…GFMNASAPPP (129 aa). The FH2 domain occupies 953 to 1368; the sequence is VVPSIRPKNK…YEIRKKILED (416 aa). 2 coiled-coil regions span residues 1240–1312 and 1351–1382; these read HNIS…GELN and QREEEQRTYEIRKKILEDKIAKKEKLKEESAE. Residues 1447–1471 form a disordered region; it reads LKRRMTTRKRTTDGETSPKSEQFMS.

This sequence belongs to the formin homology family. BNI1 subfamily. Interacts with IQG1.

It is found in the bud neck. The protein resides in the cell septum. Functionally, may organize microtubules by mediating spindle positioning and movement in the budding process. Required for cytokinesis and the maintenance of polarized hyphal growth. This Candida albicans (strain SC5314 / ATCC MYA-2876) (Yeast) protein is Formin BNR1 (BNR1).